The chain runs to 505 residues: 11S globulin seed storage protein 1 (505 aa).

An N-terminal signal peptide occupies residues 1-24 (MAKPILLSIYLCLIIVALFNGCLA). 2 cysteine pairs are disulfide-bonded: cysteine 37–cysteine 70 and cysteine 113–cysteine 323. In terms of domain architecture, Cupin type-1 1 spans 42–255 (LDALEPTNRI…AFNVDTETAR (214 aa)). 3 igE-binding regions span residues 118–132 (EESQRQSQQGQRREF), 208–219 (EQHRRQQQHQQR), and 238–249 (FDAEFLADAFNV). The tract at residues 193–232 (GNPDDEFRPQGQQEYEQHRRQQQHQQRRGEHGEQQRDLGN) is disordered. Basic and acidic residues predominate over residues 219-228 (RRGEHGEQQR). Residues 282–316 (WSREEQEHEERKERERERESESERRQSRRGGRDDN) show a composition bias toward basic and acidic residues. Positions 282–318 (WSREEQEHEERKERERERESESERRQSRRGGRDDNGL) are disordered. The NGXEET; peptidase recognition motif signature appears at 316-321 (NGLEET). The Cupin type-1 2 domain occupies 329–478 (ENIGDPSRAD…AFQIPREDAR (150 aa)).

This sequence belongs to the 11S seed storage protein (globulins) family. As to quaternary structure, homohexamer. Each subunit is composed of an acidic and a basic chain derived from a single precursor and linked by a disulfide bond. Expressed in seeds (at protein level). Expressed in seeds.

In terms of biological role, seed storage protein. This Carya illinoinensis (Pecan) protein is 11S globulin seed storage protein 1.